The primary structure comprises 376 residues: Calcium uniporter protein, mitochondrial (376 aa).

Residues 1 to 34 (MAAKVCRSVLLLSRSSGAVASSAYPAFGVSSQRH) constitute a mitochondrion transit peptide. Residues 35-257 (QGTKTEALSM…LSKKAERRTT (223 aa)) lie on the Mitochondrial matrix side of the membrane. The N-terminal MCU domain stretch occupies residues 99–189 (VSVVYQNGLP…TSYLVQPPRR (91 aa)). Residues 213-254 (TLRIEEHQLNKERELIGRLEDLNSQLQPLEKVKEELSKKAER) are a coiled coil. Residues 258-280 (WVLWGGMAYMATQFGILARLTWW) form a helical membrane-spanning segment. The Mitochondrial intermembrane portion of the chain corresponds to 281-289 (EYSWDIMEP). Positions 284–292 (WDIMEPVTY) match the Selectivity filter motif. A Ca(2+)-binding site is contributed by Glu288. The helical transmembrane segment at 290 to 309 (VTYFITYGTAMAMYAYFVLT) threads the bilayer. Residues 309–314 (TRQEYL) are juxtamembrane helix. Residues 310 to 376 (RQEYLYPDAR…PIQQIDTSKD (67 aa)) lie on the Mitochondrial matrix side of the membrane. Positions 336 to 363 (FDIEKYNKLKDAIAEAELDLKRLRDPLQ) form a coiled coil.

The protein belongs to the MCU (TC 1.A.77) family. Homotetramer. Component of the uniplex complex.

The protein localises to the mitochondrion inner membrane. It carries out the reaction Ca(2+)(in) = Ca(2+)(out). With respect to regulation, MCU channel activity is regulated by the heterodimer composed of micu1 and micu2, which act as calcium-sensors. At low calcium levels, micu1 occludes the pore of the MCU channel, preventing mitochondrial calcium uptake. At higher calcium levels, calcium-binding to micu1 and micu2 induces a conformational change that weakens mcu-micu1 interactions and moves the micu1-micu2 heterodimer away from the pore, allowing calcium permeation through the channel. MCU channel activity is gated by emre/smdt1 via the juxtamembrane helix loop. Inhibited by ruthenium red or its derivative Ru360. Its function is as follows. Channel-forming and calcium-conducting subunit of the mitochondrial inner membrane calcium uniporter complex (uniplex), which mediates calcium uptake into the mitochondrial matrix. Mcu channel activity is regulated by the calcium-sensor subunits of the uniplex micu1 and micu2. Mitochondrial calcium homeostasis plays key roles in cellular physiology and regulates ATP production, cytoplasmic calcium signals and activation of cell death pathways. Involved in buffering the amplitude of systolic calcium rises in cardiomyocytes. While dispensable for baseline homeostatic cardiac function, acts as a key regulator of short-term mitochondrial calcium loading underlying a 'fight-or-flight' response during acute stress: acts by mediating a rapid increase of mitochondrial calcium in pacemaker cells. Mitochondrial calcium uptake in skeletal muscle cells is involved in muscle size in adults. The sequence is that of Calcium uniporter protein, mitochondrial from Danio rerio (Zebrafish).